The primary structure comprises 131 residues: Conotoxin Cal8.1 (131 aa).

The N-terminal stretch at 1 to 19 (MKLLLTLLLGSALMCITLA) is a signal peptide. The propeptide occupies 20 to 38 (DECGLGTHRPVKEVIDNVR).

In terms of processing, contains 4 disulfide bonds. In terms of tissue distribution, expressed by the venom duct.

It is found in the secreted. Functionally, probable neurotoxin with unknown target. Possibly targets ion channels. The sequence is that of Conotoxin Cal8.1 from Californiconus californicus (California cone).